The primary structure comprises 467 residues: Pancreatic lipase-related protein 3 (467 aa).

Residues 1–17 form the signal peptide; that stretch reads MLGIWIVAFLFFGTSRG. Cys-21 and Cys-27 are disulfide-bonded. Asn-74 is a glycosylation site (N-linked (GlcNAc...) asparagine). Cys-107 and Cys-118 form a disulfide bridge. Asn-125 carries N-linked (GlcNAc...) asparagine glycosylation. Ser-168 functions as the Nucleophile in the catalytic mechanism. The active-site Charge relay system is Asp-191. Cysteines 252 and 277 form a disulfide. The active-site Charge relay system is the His-279. 3 disulfides stabilise this stretch: Cys-301-Cys-312, Cys-315-Cys-320, and Cys-451-Cys-467. The 113-residue stretch at 355–467 folds into the PLAT domain; that stretch reads WRHKLSVKLS…PNILQNLKPC (113 aa).

The protein belongs to the AB hydrolase superfamily. Lipase family. In terms of tissue distribution, overexpressed in hepatocellular carcinoma.

The protein localises to the secreted. It carries out the reaction a triacylglycerol + H2O = a diacylglycerol + a fatty acid + H(+). The sequence is that of Pancreatic lipase-related protein 3 (PNLIPRP3) from Homo sapiens (Human).